An 880-amino-acid chain; its full sequence is uncharacterized protein (880 aa).

Disordered regions lie at residues 101–149, 191–224, 240–273, 294–350, 425–446, 470–508, 536–561, 580–613, 682–713, and 844–880; these read KPIP…LRSE, PETS…ISTH, TTTT…PILK, NSNS…STTS, QPDS…ESQP, STST…SSSS, MESS…NDNS, APQS…NDDE, NTNT…NINN, and NSSG…KSEI. Positions 113–147 form a coiled coil; the sequence is ISIKEKEKEKEKEKEKEKEKEKEKEKEMKSTINLR. The span at 115-149 shows a compositional bias: basic and acidic residues; the sequence is IKEKEKEKEKEKEKEKEKEKEKEKEMKSTINLRSE. Composition is skewed to low complexity over residues 193–223 and 240–256; these read TSTP…SIST and TTTT…PSSS. Residues 257-271 are compositionally biased toward polar residues; it reads IAGITNPTSRSSSPI. Over residues 294–332 the composition is skewed to low complexity; the sequence is NSNSSSGGGNNNNKSISTPSSPIISRPITNKINNNNNNN. The segment covering 333 to 342 has biased composition (polar residues); that stretch reads QPQLHYNQPQ. Residues 536–548 are compositionally biased toward low complexity; it reads MESSTTTTLLSEN. Over residues 589–613 the composition is skewed to acidic residues; the sequence is QPEDDPFFDFEDLSDDDDSNDNDDE. Residues 844 to 864 are compositionally biased toward low complexity; that stretch reads NSSGSGNNSNDNSGSSSPSSS. A compositionally biased stretch (polar residues) spans 865 to 880; the sequence is KTNTLNQQSICIKSEI.

This is an uncharacterized protein from Dictyostelium discoideum (Social amoeba).